Consider the following 228-residue polypeptide: Latherin (228 aa).

The N-terminal stretch at 1 to 20 (MLKVSCLFVLLCGLLVPSSA) is a signal peptide. A disulfide bridge links cysteine 153 with cysteine 196.

The protein belongs to the BPI/LBP/Plunc superfamily. Plunc family. As to quaternary structure, monomer. Post-translationally, no sign of N-X-[ST] acceptor site even though reported as N-glycosylated. In terms of tissue distribution, found in sweat (at protein level).

The protein resides in the secreted. In terms of biological role, major protein in sweat, has surfactant properties. Has a role in temperature regulation by having a capacity to make hydrophobic surfaces wettable and so can function in promoting spreading and evaporation of sweat. The sequence is that of Latherin (LATH) from Equus caballus (Horse).